A 235-amino-acid polypeptide reads, in one-letter code: 7-carboxy-7-deazaguanine synthase (235 aa).

Substrate contacts are provided by residues isoleucine 25 to glycine 27 and arginine 40. The Radical SAM core domain occupies phenylalanine 31 to proline 235. [4Fe-4S] cluster-binding residues include cysteine 44, cysteine 48, and cysteine 51. Threonine 53 is a Mg(2+) binding site. A substrate-binding site is contributed by threonine 85. Residues glycine 87 and serine 135–lysine 137 contribute to the S-adenosyl-L-methionine site. Substrate is bound at residue proline 235.

It belongs to the radical SAM superfamily. 7-carboxy-7-deazaguanine synthase family. In terms of assembly, homodimer. [4Fe-4S] cluster is required as a cofactor. S-adenosyl-L-methionine serves as cofactor. Requires Mg(2+) as cofactor.

The enzyme catalyses 6-carboxy-5,6,7,8-tetrahydropterin + H(+) = 7-carboxy-7-deazaguanine + NH4(+). Its pathway is purine metabolism; 7-cyano-7-deazaguanine biosynthesis. In terms of biological role, catalyzes the complex heterocyclic radical-mediated conversion of 6-carboxy-5,6,7,8-tetrahydropterin (CPH4) to 7-carboxy-7-deazaguanine (CDG), a step common to the biosynthetic pathways of all 7-deazapurine-containing compounds. The sequence is that of 7-carboxy-7-deazaguanine synthase from Hyperthermus butylicus (strain DSM 5456 / JCM 9403 / PLM1-5).